Consider the following 92-residue polypeptide: Small ribosomal subunit protein uS19c (92 aa).

Belongs to the universal ribosomal protein uS19 family.

It is found in the plastid. It localises to the chloroplast. Functionally, protein S19 forms a complex with S13 that binds strongly to the 16S ribosomal RNA. This chain is Small ribosomal subunit protein uS19c, found in Oedogonium cardiacum (Filamentous green alga).